The primary structure comprises 466 residues: 3-isopropylmalate dehydratase large subunit (466 aa).

Positions 347, 408, and 411 each coordinate [4Fe-4S] cluster.

It belongs to the aconitase/IPM isomerase family. LeuC type 1 subfamily. In terms of assembly, heterodimer of LeuC and LeuD. It depends on [4Fe-4S] cluster as a cofactor.

It catalyses the reaction (2R,3S)-3-isopropylmalate = (2S)-2-isopropylmalate. It participates in amino-acid biosynthesis; L-leucine biosynthesis; L-leucine from 3-methyl-2-oxobutanoate: step 2/4. In terms of biological role, catalyzes the isomerization between 2-isopropylmalate and 3-isopropylmalate, via the formation of 2-isopropylmaleate. The sequence is that of 3-isopropylmalate dehydratase large subunit from Herminiimonas arsenicoxydans.